Reading from the N-terminus, the 94-residue chain is MLELNLQLFAHKKGGGSTSNGRDSQAKRLGAKASDGELVSGGSILFRQRGTHIHPGTNVGRGGDDTLFAKIEGTVKFEMKRGKKHVSVYPVVAK.

A propeptide spanning residues 1–9 (MLELNLQLF) is cleaved from the precursor. The disordered stretch occupies residues 12 to 33 (KKGGGSTSNGRDSQAKRLGAKA).

Belongs to the bacterial ribosomal protein bL27 family. Post-translationally, the N-terminus is cleaved by ribosomal processing cysteine protease Prp.

The protein is Large ribosomal subunit protein bL27 of Lactococcus lactis subsp. cremoris (strain MG1363).